A 103-amino-acid chain; its full sequence is Small ribosomal subunit protein uS10 (103 aa).

This sequence belongs to the universal ribosomal protein uS10 family. As to quaternary structure, part of the 30S ribosomal subunit.

Its function is as follows. Involved in the binding of tRNA to the ribosomes. The chain is Small ribosomal subunit protein uS10 from Polynucleobacter asymbioticus (strain DSM 18221 / CIP 109841 / QLW-P1DMWA-1) (Polynucleobacter necessarius subsp. asymbioticus).